Here is a 562-residue protein sequence, read N- to C-terminus: Sulfite reductase [NADPH] hemoprotein beta-component (562 aa).

[4Fe-4S] cluster contacts are provided by Cys-426, Cys-432, Cys-471, and Cys-475. Cys-475 serves as a coordination point for siroheme.

This sequence belongs to the nitrite and sulfite reductase 4Fe-4S domain family. In terms of assembly, alpha(8)-beta(8). The alpha component is a flavoprotein, the beta component is a hemoprotein. Requires siroheme as cofactor. The cofactor is [4Fe-4S] cluster.

It carries out the reaction hydrogen sulfide + 3 NADP(+) + 3 H2O = sulfite + 3 NADPH + 4 H(+). It functions in the pathway sulfur metabolism; hydrogen sulfide biosynthesis; hydrogen sulfide from sulfite (NADPH route): step 1/1. Functionally, component of the sulfite reductase complex that catalyzes the 6-electron reduction of sulfite to sulfide. This is one of several activities required for the biosynthesis of L-cysteine from sulfate. This chain is Sulfite reductase [NADPH] hemoprotein beta-component, found in Shewanella denitrificans (strain OS217 / ATCC BAA-1090 / DSM 15013).